A 409-amino-acid chain; its full sequence is Elongation factor Tu, cyanelle (409 aa).

The tr-type G domain maps to 10–214; that stretch reads KPHVNIGTIG…AVDEYIPTPE (205 aa). The segment at 19–26 is G1; the sequence is GHVDHGKT. GTP is bound at residue 19–26; that stretch reads GHVDHGKT. Thr26 contributes to the Mg(2+) binding site. The interval 60 to 64 is G2; that stretch reads GITIN. Positions 81–84 are G3; that stretch reads DCPG. Residues 81-85 and 136-139 contribute to the GTP site; these read DCPGH and NKED. The tract at residues 136–139 is G4; that stretch reads NKED. The G5 stretch occupies residues 174–176; sequence SAL.

The protein belongs to the TRAFAC class translation factor GTPase superfamily. Classic translation factor GTPase family. EF-Tu/EF-1A subfamily.

It localises to the plastid. The protein resides in the cyanelle. It carries out the reaction GTP + H2O = GDP + phosphate + H(+). Functionally, GTP hydrolase that promotes the GTP-dependent binding of aminoacyl-tRNA to the A-site of ribosomes during protein biosynthesis. The protein is Elongation factor Tu, cyanelle (tufA) of Cyanophora paradoxa.